Here is a 413-residue protein sequence, read N- to C-terminus: Probable alpha-amylase 2 (413 aa).

Residues 74–75 (YL) and 191–196 (RFDFAR) contribute to the substrate site. The Nucleophile role is filled by Asp193. Glu218 (proton donor) is an active-site residue. Residues Trp220, Ser222, Gln239, Asp246, Lys280, 286–288 (GWW), His299, Gln305, Lys386, and Trp411 each bind substrate.

The protein belongs to the glycosyl hydrolase 13 family. The cofactor is Ca(2+). Expressed in developing siliques.

The protein localises to the cytoplasm. It is found in the cytosol. The catalysed reaction is Endohydrolysis of (1-&gt;4)-alpha-D-glucosidic linkages in polysaccharides containing three or more (1-&gt;4)-alpha-linked D-glucose units.. Its function is as follows. Probable alpha-amylase that does not seem to be required for breakdown of transitory starch in leaves. This is Probable alpha-amylase 2 (AMY2) from Arabidopsis thaliana (Mouse-ear cress).